Here is a 1155-residue protein sequence, read N- to C-terminus: MIKRVHLGQGRADEILDLPNLIEIQLNSYEKFLQLDKLKNKKPLLNEGLESVFRNIFPIKSGNGDVALEYERYYIENDTLNFTEKECKRKGQSYEAVLKVRLNLQFLTTGEIRQKDVYMGTIPLMTERGTFIINGAERVIVSQIHRSPGVVFYKEKDLYSARIIPYRGSWLEFEIDSKKDYLYVKIDRKKRILITLFLRALGFDTREKIIETFYNIKKIKVEEGTKRDLPGQYLAKSINIRENMYYRAGDKITLQDVEDFLQNGVNEIELVDFDGYNDVSGKYFVSSNVILNCLEKEDAFFALKDGSKELPKESVMLAVYGALFPGEPISIDNAENDLKTIFFSERRYDLGRVGRYKLSKKFGSDDLSTSVLTMDDIVNTISHLLRIYEGHDILDDIDHLGNRRVRSVGELLTNIYKGAMSRVEKIAKDRMSNKEVFNLKPQELISVKPIVSAVKEFFATSQLSQFMDQVNPLAELTHKRRLNALGPGGLSRDRAGFEVRDVHYTHYGRMCPIETPEGPNIGLIVSLATYSRVNDYGFLETPYRKVVNGEVTNELEYLSAIDEEKKCIAQANAAFNSDGKYLEDLVSVRISGDYTTTNPKNIDYMDVSPRQLISVSSALIPFLEHNDANRALMGSNMQRQAVPLLFPKPPIVGTGMESVVAKDSGVVVKAKRSGEVILATSNKIVVKPFESENVKDLDEYHIVKYERTNQDTCFNQSVLVKEGQKVERGEIIADGPATRYGELALGNNLLLGVIPWNGFNYEDAILISDRIVKEDLYTSIHIKEFSIEVRETKLGPEKVTGDIPNVSEKILNKLDENGIIRIGTYVKPGDILVGKVTPKSEGDITPEFRLLTSIFGEKAKDVKNNSLKVPHGTEGTVIDVQRITKEDVGNLSPGVEEILKVYVAKKRKLKEGDKMAGRHGNKGVVAKILPVEDMPYLADGTPLDICLNPLGVPSRMNIGQLMESQLGLAGKYLSESYNVPVFESATNEQIQEKLKKAGFNPTSKEILYDGYTGEPFENEVMVGVIYMLKLHHLVDDKMHARSTGPYSLVSQQPLGGKAQFGGQRLGEMEVWALEAYGAAHTLQELLTVKSDDMSGRVKIYENIVKGVPTNVSGIPESFNVLMQELRGLGLDLSIYDDNGNQVPLTEKEEELINKS.

It belongs to the RNA polymerase beta chain family. In terms of assembly, the RNAP catalytic core consists of 2 alpha, 1 beta, 1 beta' and 1 omega subunit. When a sigma factor is associated with the core the holoenzyme is formed, which can initiate transcription.

It carries out the reaction RNA(n) + a ribonucleoside 5'-triphosphate = RNA(n+1) + diphosphate. In terms of biological role, DNA-dependent RNA polymerase catalyzes the transcription of DNA into RNA using the four ribonucleoside triphosphates as substrates. The chain is DNA-directed RNA polymerase subunit beta from Borreliella afzelii (strain PKo) (Borrelia afzelii).